A 301-amino-acid polypeptide reads, in one-letter code: GTP cyclohydrolase FolE2 (301 aa).

It belongs to the GTP cyclohydrolase IV family.

It carries out the reaction GTP + H2O = 7,8-dihydroneopterin 3'-triphosphate + formate + H(+). Its pathway is cofactor biosynthesis; 7,8-dihydroneopterin triphosphate biosynthesis; 7,8-dihydroneopterin triphosphate from GTP: step 1/1. Its function is as follows. Converts GTP to 7,8-dihydroneopterin triphosphate. In Exiguobacterium sibiricum (strain DSM 17290 / CCUG 55495 / CIP 109462 / JCM 13490 / 255-15), this protein is GTP cyclohydrolase FolE2.